Reading from the N-terminus, the 173-residue chain is Competence protein C (173 aa).

Functionally, involved in transformation (genetic competence for DNA uptake). This Haemophilus influenzae (strain ATCC 51907 / DSM 11121 / KW20 / Rd) protein is Competence protein C (comC).